The following is a 467-amino-acid chain: MSDDKSQIKIKFFTNEEDVSLQVSDAPLYVPVSLKRYGLSEVVNQLLGNDGENDDSKPIPFDFLIDGVLLRTSIQDYLTKNGLSSETFLSLEYTRAVLPPSFLASFNNEDWISSLDTINKTLPSVTLSNMMISQPKILSGSYDGIVRTYNMSGNVEKQYVGHSGPIRAVKWVSPTRIVSAGNDRQVRLWKTSADDGSIPEEDEEAEDGRTLAILEGHKAPVVALAVENTSNRILSAGYDHSIGFWSTNYKEMTTIQPLEYDSNVLSSSSKKRRKMALQDSTIRRRSPLALLDSHTQPVEDVIFDNTDATVGYSVSQDHTIKTWDLVTSRCIDTRSTGYSLLSIVQLPKSKLLATGSSARHINLHDPRISNNTTEQTTSKLVGHTNFVVSLAASPNNDNMFASGSHDGTVKVWDIRTDKSLYTITRESPEAVKGADKVFAVSWDNEIGIISGGQDKKIQINKGSDISK.

Residues 8–95 (IKIKFFTNEE…ETFLSLEYTR (88 aa)) form a ubiquitin-like (UBL) domain region. Residues 105–467 (SFNNEDWISS…QINKGSDISK (363 aa)) form a sufficient for interaction with ERB1 and association with 66S pre-ribosomes region. 7 WD repeats span residues 120–159 (KTLPSVTLSNMMISQPKILSGSYDGIVRTYNMSGNVEKQY), 161–199 (GHSGPIRAVKWVSPTRIVSAGNDRQVRLWKTSADDGSIP), 216–255 (GHKAPVVALAVENTSNRILSAGYDHSIGFWSTNYKEMTTI), 293–333 (SHTQ…CIDT), 335–374 (STGYSLLSIVQLPKSKLLATGSSARHINLHDPRISNNTTE), 382–422 (GHTN…SLYT), and 432–467 (KGADKVFAVSWDNEIGIISGGQDKKIQINKGSDISK).

This sequence belongs to the WD repeat WDR12/YTM1 family. As to quaternary structure, component of the NOP7 complex, composed of ERB1, NOP7 and YTM1. The complex is held together by ERB1, which interacts with NOP7 via its N-terminal domain and with YTM1 via a high-affinity interaction between the seven-bladed beta-propeller domains of the 2 proteins. The NOP7 complex associates with the 66S pre-ribosome. Interacts (via UBL domain) with MDN1 (via VWFA/MIDAS domain).

The protein resides in the nucleus. It is found in the nucleolus. The protein localises to the nucleoplasm. Component of the NOP7 complex, which is required for maturation of the 25S and 5.8S ribosomal RNAs and formation of the 60S ribosome. This chain is Ribosome biogenesis protein YTM1, found in Scheffersomyces stipitis (strain ATCC 58785 / CBS 6054 / NBRC 10063 / NRRL Y-11545) (Yeast).